A 240-amino-acid polypeptide reads, in one-letter code: Probable transcriptional regulatory protein A2cp1_1765 (240 aa).

This sequence belongs to the TACO1 family.

It is found in the cytoplasm. The polypeptide is Probable transcriptional regulatory protein A2cp1_1765 (Anaeromyxobacter dehalogenans (strain 2CP-1 / ATCC BAA-258)).